The following is a 366-amino-acid chain: RNA 3'-terminal phosphate cyclase (366 aa).

ATP-binding residues include Gln104, Pro131, Tyr294, Asp297, Gln298, and His320. His320 functions as the Tele-AMP-histidine intermediate in the catalytic mechanism.

It belongs to the RNA 3'-terminal cyclase family. Type 1 subfamily.

It is found in the nucleus. It localises to the nucleoplasm. It catalyses the reaction a 3'-end 3'-phospho-ribonucleotide-RNA + ATP = a 3'-end 2',3'-cyclophospho-ribonucleotide-RNA + AMP + diphosphate. In terms of biological role, catalyzes the conversion of 3'-phosphate to a 2',3'-cyclic phosphodiester at the end of RNA. The mechanism of action of the enzyme occurs in 3 steps: (A) adenylation of the enzyme by ATP; (B) transfer of adenylate to an RNA-N3'P to produce RNA-N3'PP5'A; (C) and attack of the adjacent 2'-hydroxyl on the 3'-phosphorus in the diester linkage to produce the cyclic end product. Likely functions in some aspects of cellular RNA processing. Function plays an important role in regulating axon regeneration by inhibiting central nervous system (CNS) axon regeneration following optic nerve injury. This chain is RNA 3'-terminal phosphate cyclase (RTCA), found in Macaca fascicularis (Crab-eating macaque).